The following is a 79-amino-acid chain: Neurotoxin BmK-M9 (79 aa).

The signal sequence occupies residues Met1 to Ser14. One can recognise an LCN-type CS-alpha/beta domain in the interval Arg16–His78. Disulfide bonds link Cys26-Cys77, Cys30-Cys50, Cys36-Cys60, and Cys40-Cys62. Position 79 (Arg79) is a propeptide, removed by a carboxypeptidase.

Belongs to the long (4 C-C) scorpion toxin superfamily. Sodium channel inhibitor family. Alpha subfamily. In terms of tissue distribution, expressed by the venom gland.

It is found in the secreted. Functionally, binds to sodium channels (Nav) and inhibits the inactivation of the activated channels, thereby blocking neuronal transmission. This toxin is active against mammals. In Olivierus martensii (Manchurian scorpion), this protein is Neurotoxin BmK-M9.